Here is a 149-residue protein sequence, read N- to C-terminus: Large ribosomal subunit protein uL15 (149 aa).

The segment at 14–63 (ASRKRVGRGSGSGLGCTSGKGNKGQNARAGGGVRPGFEGGQMPLQRRLPK) is disordered. Gly residues-rich tracts occupy residues 21–35 (RGSG…GKGN) and 42–52 (AGGGVRPGFEG).

The protein belongs to the universal ribosomal protein uL15 family. As to quaternary structure, part of the 50S ribosomal subunit.

Functionally, binds to the 23S rRNA. The chain is Large ribosomal subunit protein uL15 from Nitratidesulfovibrio vulgaris (strain DSM 19637 / Miyazaki F) (Desulfovibrio vulgaris).